Reading from the N-terminus, the 436-residue chain is GTPase Der (436 aa).

2 EngA-type G domains span residues 4–167 and 176–351; these read PVVA…KNIP and VQFC…ENHS. GTP is bound by residues 10 to 17, 57 to 61, 119 to 122, 182 to 189, 229 to 233, and 294 to 297; these read GRPNVGKS, DTGGI, NKVD, DTAGM, and NKWD. The 85-residue stretch at 352-436 folds into the KH-like domain; sequence MRVQTNILND…PIRIFARARK (85 aa).

Belongs to the TRAFAC class TrmE-Era-EngA-EngB-Septin-like GTPase superfamily. EngA (Der) GTPase family. As to quaternary structure, associates with the 50S ribosomal subunit.

Its function is as follows. GTPase that plays an essential role in the late steps of ribosome biogenesis. This is GTPase Der from Bacillus licheniformis (strain ATCC 14580 / DSM 13 / JCM 2505 / CCUG 7422 / NBRC 12200 / NCIMB 9375 / NCTC 10341 / NRRL NRS-1264 / Gibson 46).